Here is a 643-residue protein sequence, read N- to C-terminus: 1-deoxy-D-xylulose-5-phosphate synthase (643 aa).

Thiamine diphosphate-binding positions include His78 and 119–121; that span reads AHS. Asp150 serves as a coordination point for Mg(2+). Residues 151 to 152, Asn179, Tyr288, and Glu370 contribute to the thiamine diphosphate site; that span reads GA. Asn179 is a Mg(2+) binding site.

It belongs to the transketolase family. DXPS subfamily. In terms of assembly, homodimer. Mg(2+) serves as cofactor. Requires thiamine diphosphate as cofactor.

The catalysed reaction is D-glyceraldehyde 3-phosphate + pyruvate + H(+) = 1-deoxy-D-xylulose 5-phosphate + CO2. The protein operates within metabolic intermediate biosynthesis; 1-deoxy-D-xylulose 5-phosphate biosynthesis; 1-deoxy-D-xylulose 5-phosphate from D-glyceraldehyde 3-phosphate and pyruvate: step 1/1. Its function is as follows. Catalyzes the acyloin condensation reaction between C atoms 2 and 3 of pyruvate and glyceraldehyde 3-phosphate to yield 1-deoxy-D-xylulose-5-phosphate (DXP). The sequence is that of 1-deoxy-D-xylulose-5-phosphate synthase from Xanthobacter autotrophicus (strain ATCC BAA-1158 / Py2).